An 870-amino-acid polypeptide reads, in one-letter code: Leucine--tRNA ligase (870 aa).

The short motif at 55-65 (PYPSGTLHMGH) is the 'HIGH' region element. The 'KMSKS' region motif lies at 626 to 630 (KMSKS). Lysine 629 provides a ligand contact to ATP.

It belongs to the class-I aminoacyl-tRNA synthetase family.

Its subcellular location is the cytoplasm. It carries out the reaction tRNA(Leu) + L-leucine + ATP = L-leucyl-tRNA(Leu) + AMP + diphosphate. The polypeptide is Leucine--tRNA ligase (Prochlorococcus marinus (strain SARG / CCMP1375 / SS120)).